The sequence spans 966 residues: Envelope glycoprotein (966 aa).

Residues 1–83 (MDAGARYMRL…LLGINMCVSA (83 aa)) form the signal peptide. At 84–801 (EDYITLISDP…SLKDVFDWSG (718 aa)) the chain is on the extracellular side. N-linked (GlcNAc...) asparagine; by host glycans are attached at residues Asn101, Asn134, Asn179, Asn220, Asn231, Asn334, Asn351, Asn357, Asn382, Asn403, Asn407, Asn438, Asn443, Asn449, Asn459, Asn469, Asn483, Asn495, Asn505, Asn511, Asn529, and Asn536. The interval 633-653 (GVGLVIMLVIMAIVAAAGASL) is fusion peptide. Coiled-coil stretches lie at residues 665–715 (KAAV…RIML) and 756–791 (RGLQGYDTNLTILLKESAAMTQLAEEQARRIPEVWE). The segment at 699–715 (LEARVARVEAITDRIML) is immunosuppression. Residues 802-822 (WFSWLKYIPIIVVGLLGCILI) traverse the membrane as a helical segment. Over 823 to 966 (RAVICVCQPL…LWCYKKSKSL (144 aa)) the chain is Cytoplasmic.

The mature envelope protein (Env) consists of a trimer of SU-TM heterodimers attached by noncovalent interactions or by a labile interchain disulfide bond. Specific enzymatic cleavages in vivo yield mature proteins. Envelope glycoproteins are synthesized as an inactive precursor that is N-glycosylated and processed likely by host cell furin or by a furin-like protease in the Golgi to yield the mature SU and TM proteins. The cleavage site between SU and TM requires the minimal sequence [KR]-X-[KR]-R.

Its subcellular location is the virion membrane. It localises to the host cell membrane. Functionally, the surface protein (SU) attaches the virus to the host cell by binding to its receptor. This interaction triggers the refolding of the transmembrane protein (TM) and is thought to activate its fusogenic potential by unmasking its fusion peptide. Fusion occurs at the host cell plasma membrane. The transmembrane protein (TM) acts as a class I viral fusion protein. Under the current model, the protein has at least 3 conformational states: pre-fusion native state, pre-hairpin intermediate state, and post-fusion hairpin state. During viral and target cell membrane fusion, the coiled coil regions (heptad repeats) assume a trimer-of-hairpins structure, positioning the fusion peptide in close proximity to the C-terminal region of the ectodomain. The formation of this structure appears to drive apposition and subsequent fusion of viral and target cell membranes. Membranes fusion leads to delivery of the nucleocapsid into the cytoplasm. This chain is Envelope glycoprotein (env), found in Caprine arthritis encephalitis virus (strain Cork) (CAEV-Co).